Here is a 297-residue protein sequence, read N- to C-terminus: Tyrosine recombinase XerC (297 aa).

Residues Met-1–Met-84 form the Core-binding (CB) domain. In terms of domain architecture, Tyr recombinase spans Tyr-105 to Leu-286. Active-site residues include Arg-145, Lys-169, His-238, Arg-241, and His-264. The active-site O-(3'-phospho-DNA)-tyrosine intermediate is Tyr-273.

The protein belongs to the 'phage' integrase family. XerC subfamily. As to quaternary structure, forms a cyclic heterotetrameric complex composed of two molecules of XerC and two molecules of XerD.

It localises to the cytoplasm. Site-specific tyrosine recombinase, which acts by catalyzing the cutting and rejoining of the recombining DNA molecules. The XerC-XerD complex is essential to convert dimers of the bacterial chromosome into monomers to permit their segregation at cell division. It also contributes to the segregational stability of plasmids. The chain is Tyrosine recombinase XerC from Staphylococcus haemolyticus (strain JCSC1435).